Here is a 342-residue protein sequence, read N- to C-terminus: Succinylglutamate desuccinylase (342 aa).

Residues histidine 63, glutamate 66, and histidine 155 each coordinate Zn(2+). Glutamate 219 is an active-site residue.

Belongs to the AspA/AstE family. Succinylglutamate desuccinylase subfamily. Zn(2+) is required as a cofactor.

It carries out the reaction N-succinyl-L-glutamate + H2O = L-glutamate + succinate. Its pathway is amino-acid degradation; L-arginine degradation via AST pathway; L-glutamate and succinate from L-arginine: step 5/5. In terms of biological role, transforms N(2)-succinylglutamate into succinate and glutamate. The chain is Succinylglutamate desuccinylase from Vibrio cholerae serotype O1 (strain ATCC 39315 / El Tor Inaba N16961).